The following is a 276-amino-acid chain: uncharacterized protein (276 aa).

The region spanning 20 to 137 is the AB hydrolase-1 domain; the sequence is PVLIFIPGAN…PPINTFLPDS (118 aa).

Belongs to the AB hydrolase superfamily.

This is an uncharacterized protein from Staphylococcus aureus (strain MRSA252).